The chain runs to 82 residues: Cytochrome b559 subunit alpha (82 aa).

Residues 22–36 (IIHAVTLPAIFIAGF) form a helical membrane-spanning segment. Residue His24 coordinates heme.

It belongs to the PsbE/PsbF family. In terms of assembly, heterodimer of an alpha subunit and a beta subunit. PSII is composed of 1 copy each of membrane proteins PsbA, PsbB, PsbC, PsbD, PsbE, PsbF, PsbH, PsbI, PsbJ, PsbK, PsbL, PsbM, PsbT, PsbX, PsbY, Psb30/Ycf12, peripheral proteins PsbO, CyanoQ (PsbQ), PsbU, PsbV and a large number of cofactors. It forms dimeric complexes. It depends on heme b as a cofactor.

Its subcellular location is the cellular thylakoid membrane. In terms of biological role, this b-type cytochrome is tightly associated with the reaction center of photosystem II (PSII). PSII is a light-driven water:plastoquinone oxidoreductase that uses light energy to abstract electrons from H(2)O, generating O(2) and a proton gradient subsequently used for ATP formation. It consists of a core antenna complex that captures photons, and an electron transfer chain that converts photonic excitation into a charge separation. The chain is Cytochrome b559 subunit alpha from Prochlorococcus marinus (strain MIT 9211).